The chain runs to 413 residues: Protein esc1 (413 aa).

The segment covering 1–22 (MSSYALPSMQPTPTSSIPLRQM) has biased composition (polar residues). Disordered regions lie at residues 1–202 (MSSY…NQPS) and 230–265 (MYVP…YSQG). A compositionally biased stretch (low complexity) spans 23-42 (SQPTTSAPSNSASSTPYSPQ). Positions 43-63 (QVPLTHNSYPLSTPSSFQHGQ) are enriched in polar residues. Low complexity-rich tracts occupy residues 86–103 (SAAP…STAA) and 116–126 (SSSSYVYSVPP). Residues 127–136 (TNSTTSQASA) show a composition bias toward polar residues. The span at 150-197 (STTLTPSTTDSSSTDVSSSDSVSTSASSSNASNTVSVTSPASSSATPL) shows a compositional bias: low complexity. The 52-residue stretch at 334–385 (ELRTSHKLAERKRRKEIKELFDDLKDALPLDKSTKSSKWGLLTRAIQYIEQL) folds into the bHLH domain.

As to quaternary structure, efficient DNA binding requires dimerization with another bHLH protein.

The protein resides in the nucleus. Functionally, involved in the sexual differentiation process. Modulate the ability of the cell to differentiate in response to the nitrogen starvation signal; in particular in response to decreases in the level of cellular cAMP. The sequence is that of Protein esc1 (esc1) from Schizosaccharomyces pombe (strain 972 / ATCC 24843) (Fission yeast).